Consider the following 66-residue polypeptide: UPF0434 protein M446_0487 (66 aa).

This sequence belongs to the UPF0434 family.

The polypeptide is UPF0434 protein M446_0487 (Methylobacterium sp. (strain 4-46)).